The sequence spans 469 residues: Citrate synthase, mitochondrial (469 aa).

The transit peptide at Met1–Ser31 directs the protein to the mitochondrion. Active-site residues include His304 and His350. Arg359 contributes to the oxaloacetate binding site. Asp405 is an active-site residue. Oxaloacetate is bound by residues Arg431 and Arg451.

This sequence belongs to the citrate synthase family. Homodimer.

It localises to the mitochondrion matrix. The catalysed reaction is oxaloacetate + acetyl-CoA + H2O = citrate + CoA + H(+). Its pathway is carbohydrate metabolism; tricarboxylic acid cycle; isocitrate from oxaloacetate: step 1/2. In terms of biological role, key enzyme of the Krebs tricarboxylic acid cycle which catalyzes the synthesis of citrate from acetyl coenzyme A and oxaloacetate. The chain is Citrate synthase, mitochondrial (CS) from Amblyrhynchus cristatus (Galapagos marine iguana).